Consider the following 463-residue polypeptide: Dialkyldecalin synthase (463 aa).

FAD-binding positions include Val-13, 32–33 (ER), Ile-121, and Asp-275.

It belongs to the PheA/TfdB FAD monooxygenase family. In terms of assembly, homodimer. Requires FAD as cofactor.

It catalyses the reaction 4-[(2E,7S,8E,10E,13R,14R,16E,18E)-14-ethyl-7,13-dihydroxy-2,16,18-trimethylicosa-2,8,10,16,18-pentaenoyl]-2-methylidene-5-oxo-2,5-dihydro-1H-pyrrol-3-olate = 4-[(1R,2R,4aS,5S,8aR)-2-[(2R,3R,5E,7E)-3-ethyl-2-hydroxy-5,7-dimethylnona-5,7-dien-1-yl]-5-hydroxy-1-methyl-1,2,4a,5,6,7,8,8a-octahydronaphthalene-1-carbonyl]-2-methylidene-5-oxo-2,5-dihydro-1H-pyrrol-3-olate. The protein operates within antibiotic biosynthesis. In terms of biological role, involved in the biosynthesis of the spirotetramate antibiotics pyrroindomycins. Catalyzes the intramolecular cyclization forming the dialkyldecalin moiety in pyrroindomycins, via an endo-selective [4+2] cycloaddition reaction. The sequence is that of Dialkyldecalin synthase from Streptomyces rugosporus.